The sequence spans 533 residues: SH3 and F-BAR domain-containing protein DDB_G0271676 (533 aa).

Positions 5-258 (RQFSEDLWDK…GIESIDRERD (254 aa)) constitute an F-BAR domain. Positions 76–186 (REQLELIGAL…ADKGDNEYRE (111 aa)) form a coiled coil. 2 stretches are compositionally biased toward basic and acidic residues: residues 126–155 (LKTA…EDLS) and 162–184 (KEQK…DNEY). Disordered regions lie at residues 126–184 (LKTA…DNEY) and 301–405 (SRKS…INSN). Low complexity-rich tracts occupy residues 318-327 (SIISSPQQPQ), 340-360 (NIII…NNSN), 372-385 (PQQQ…QLNN), and 392-405 (SLSK…INSN). 2 consecutive SH3 domains span residues 406 to 468 (SNGE…DSSD) and 476 to 533 (VAGR…VQVI).

The protein is SH3 and F-BAR domain-containing protein DDB_G0271676 of Dictyostelium discoideum (Social amoeba).